The primary structure comprises 351 residues: (S)-coclaurine N-methyltransferase (351 aa).

S-adenosyl-L-methionine-binding positions include 91–92, 126–134, 130–132, and 153–158; these read QS, VLDLGCGLG, GCG, and TSSVEQ. C326 is a catalytic residue.

Belongs to the CFA/CMAS family. In terms of tissue distribution, expressed in roots, stems, flower buds and at lower levels, in leaves. Restricted to sieve elements of the phloem adjacent or proximal to laticifers.

It localises to the cytoplasm. It carries out the reaction (S)-coclaurine + S-adenosyl-L-methionine = (S)-N-methylcoclaurine + S-adenosyl-L-homocysteine + H(+). The protein operates within alkaloid biosynthesis; (S)-reticuline biosynthesis; (S)-reticuline from (S)-norcoclaurine: step 2/4. In terms of biological role, involved in the biosynthesis of benzylisoquinoline alkaloids. N-methyltransferase methylating (S)-coclaurine. 4'-O-methylcoclaurine and norlaudanine can also be used as substrates. This Papaver somniferum (Opium poppy) protein is (S)-coclaurine N-methyltransferase.